The primary structure comprises 555 residues: Methionine--tRNA ligase (555 aa).

The short motif at 13–23 is the 'HIGH' region element; that stretch reads PYANGSLHIGH. Zn(2+) is bound by residues Cys144, Cys147, Cys157, and Cys160. Positions 330-334 match the 'KMSKS' region motif; the sequence is KISKS. An ATP-binding site is contributed by Lys333.

It belongs to the class-I aminoacyl-tRNA synthetase family. MetG type 1 subfamily. Monomer. Zn(2+) serves as cofactor.

The protein localises to the cytoplasm. The catalysed reaction is tRNA(Met) + L-methionine + ATP = L-methionyl-tRNA(Met) + AMP + diphosphate. Its function is as follows. Is required not only for elongation of protein synthesis but also for the initiation of all mRNA translation through initiator tRNA(fMet) aminoacylation. This chain is Methionine--tRNA ligase, found in Blochmanniella pennsylvanica (strain BPEN).